Here is an 828-residue protein sequence, read N- to C-terminus: Periplasmic nitrate reductase (828 aa).

Residues 1–31 (MKLSRRSFMKANAVAAAAAAAGLSVPGVARA) constitute a signal peptide (tat-type signal). One can recognise a 4Fe-4S Mo/W bis-MGD-type domain in the interval 39 to 95 (IKWDKAPCRFCGTGCGVLVGTQQGRVVACQGDPDAPVNRGLNCIKGYFLPKIMYGKD). Cys46, Cys49, Cys53, and Cys81 together coordinate [4Fe-4S] cluster. Mo-bis(molybdopterin guanine dinucleotide) contacts are provided by residues Lys83, Gln150, Asn175, Cys179, 212 to 219 (WGANMAEM), 243 to 247 (STYQH), 262 to 264 (QSD), Met372, Gln376, Asn482, 508 to 509 (SD), Lys531, Asp558, and 718 to 727 (TGRVLEHWHT). Residue Phe794 coordinates substrate. Asn802 and Lys819 together coordinate Mo-bis(molybdopterin guanine dinucleotide).

It belongs to the prokaryotic molybdopterin-containing oxidoreductase family. NasA/NapA/NarB subfamily. Component of the periplasmic nitrate reductase NapAB complex composed of NapA and NapB. [4Fe-4S] cluster is required as a cofactor. Mo-bis(molybdopterin guanine dinucleotide) serves as cofactor. In terms of processing, predicted to be exported by the Tat system. The position of the signal peptide cleavage has not been experimentally proven.

The protein localises to the periplasm. It carries out the reaction 2 Fe(II)-[cytochrome] + nitrate + 2 H(+) = 2 Fe(III)-[cytochrome] + nitrite + H2O. Catalytic subunit of the periplasmic nitrate reductase complex NapAB. Receives electrons from NapB and catalyzes the reduction of nitrate to nitrite. This chain is Periplasmic nitrate reductase, found in Shigella boydii serotype 18 (strain CDC 3083-94 / BS512).